Here is a 122-residue protein sequence, read N- to C-terminus: Fluoride-specific ion channel FluC (122 aa).

4 consecutive transmembrane segments (helical) span residues 6-26 (LVVG…INLV), 33-53 (SISL…GLLF), 60-80 (GLSP…FTTF), and 101-121 (LNII…FIIF). Na(+)-binding residues include Gly-75 and Thr-78.

Belongs to the fluoride channel Fluc/FEX (TC 1.A.43) family.

The protein localises to the cell inner membrane. It catalyses the reaction fluoride(in) = fluoride(out). Na(+) is not transported, but it plays an essential structural role and its presence is essential for fluoride channel function. Fluoride-specific ion channel. Important for reducing fluoride concentration in the cell, thus reducing its toxicity. The chain is Fluoride-specific ion channel FluC from Campylobacter jejuni subsp. jejuni serotype O:6 (strain 81116 / NCTC 11828).